The primary structure comprises 301 residues: Phosphate transport system permease protein PstA 2 (301 aa).

Transmembrane regions (helical) follow at residues 36-56 (ACVC…IGVV), 83-103 (IIGT…VSVL), 127-147 (LSGI…VVYF), 149-169 (WGFS…PYIA), 209-229 (GIVT…APLL), and 274-294 (ALLL…INWL). Residues 83–288 (IIGTAVLAIG…VFLLLLIFIG (206 aa)) form the ABC transmembrane type-1 domain.

This sequence belongs to the binding-protein-dependent transport system permease family. CysTW subfamily.

It localises to the cell membrane. Its function is as follows. Part of the binding-protein-dependent transport system for phosphate; probably responsible for the translocation of the substrate across the membrane. This chain is Phosphate transport system permease protein PstA 2 (pstA2), found in Mycobacterium bovis (strain ATCC BAA-935 / AF2122/97).